Consider the following 421-residue polypeptide: Diaminopimelate decarboxylase (421 aa).

Lys-63 carries the N6-(pyridoxal phosphate)lysine modification. Residues Gly-242 and 278-281 contribute to the pyridoxal 5'-phosphate site; that span reads EPGR. Residues Arg-281, Arg-317, and Tyr-321 each coordinate substrate. The Proton donor role is filled by Cys-346. Substrate contacts are provided by Glu-347 and Tyr-375. Tyr-375 lines the pyridoxal 5'-phosphate pocket.

This sequence belongs to the Orn/Lys/Arg decarboxylase class-II family. LysA subfamily. As to quaternary structure, homodimer. Pyridoxal 5'-phosphate serves as cofactor.

It carries out the reaction meso-2,6-diaminopimelate + H(+) = L-lysine + CO2. It participates in amino-acid biosynthesis; L-lysine biosynthesis via DAP pathway; L-lysine from DL-2,6-diaminopimelate: step 1/1. Its function is as follows. Specifically catalyzes the decarboxylation of meso-diaminopimelate (meso-DAP) to L-lysine. This chain is Diaminopimelate decarboxylase, found in Zymomonas mobilis subsp. mobilis (strain ATCC 31821 / ZM4 / CP4).